Consider the following 448-residue polypeptide: Homogentisate 1,2-dioxygenase (448 aa).

His303 functions as the Proton acceptor in the catalytic mechanism. Fe cation-binding residues include His346 and Glu352. Positions 361 and 382 each coordinate homogentisate. Fe cation is bound at residue His382.

This sequence belongs to the homogentisate dioxygenase family. As to quaternary structure, hexamer; dimer of trimers. The cofactor is Fe cation.

It carries out the reaction homogentisate + O2 = 4-maleylacetoacetate + H(+). It participates in amino-acid degradation; L-phenylalanine degradation; acetoacetate and fumarate from L-phenylalanine: step 4/6. Involved in the catabolism of homogentisate (2,5-dihydroxyphenylacetate or 2,5-OH-PhAc), a central intermediate in the degradation of phenylalanine and tyrosine. Catalyzes the oxidative ring cleavage of the aromatic ring of homogentisate to yield maleylacetoacetate. The chain is Homogentisate 1,2-dioxygenase from Nitrobacter hamburgensis (strain DSM 10229 / NCIMB 13809 / X14).